An 85-amino-acid chain; its full sequence is MRPLLCALAGLALLCAVGALADGREDRGSPGDTGERPAGPARGPGLEPARGTLQPRPRPPRKRWLLSPGAGAQQLEVVHLPGSTL.

The first 21 residues, 1–21 (MRPLLCALAGLALLCAVGALA), serve as a signal peptide directing secretion. Over residues 22-35 (DGREDRGSPGDTGE) the composition is skewed to basic and acidic residues. The tract at residues 22–85 (DGREDRGSPG…EVVHLPGSTL (64 aa)) is disordered. A compositionally biased stretch (low complexity) spans 36 to 51 (RPAGPARGPGLEPARG).

It localises to the secreted. This is an uncharacterized protein from Homo sapiens (Human).